Reading from the N-terminus, the 55-residue chain is Large ribosomal subunit protein bL33 (55 aa).

Residues 1–11 are compositionally biased toward basic and acidic residues; that stretch reads MAKGGREKIKL. A disordered region spans residues 1–29; sequence MAKGGREKIKLESSAGTGHFYTTSKNKRT. The span at 14–24 shows a compositional bias: polar residues; that stretch reads SAGTGHFYTTS.

Belongs to the bacterial ribosomal protein bL33 family.

This Polynucleobacter asymbioticus (strain DSM 18221 / CIP 109841 / QLW-P1DMWA-1) (Polynucleobacter necessarius subsp. asymbioticus) protein is Large ribosomal subunit protein bL33.